The chain runs to 695 residues: Elongation factor G 1 (695 aa).

The tr-type G domain maps to S6 to T284. GTP contacts are provided by residues A15 to T22, D82 to H86, and N136 to D139.

Belongs to the TRAFAC class translation factor GTPase superfamily. Classic translation factor GTPase family. EF-G/EF-2 subfamily.

Its subcellular location is the cytoplasm. Its function is as follows. Catalyzes the GTP-dependent ribosomal translocation step during translation elongation. During this step, the ribosome changes from the pre-translocational (PRE) to the post-translocational (POST) state as the newly formed A-site-bound peptidyl-tRNA and P-site-bound deacylated tRNA move to the P and E sites, respectively. Catalyzes the coordinated movement of the two tRNA molecules, the mRNA and conformational changes in the ribosome. The polypeptide is Elongation factor G 1 (Desulfotalea psychrophila (strain LSv54 / DSM 12343)).